The chain runs to 118 residues: Small ribosomal subunit protein uS13 (118 aa).

Residues 94 to 118 (SLPLRGQRTKTNARTRKGPRKPIRK) form a disordered region.

This sequence belongs to the universal ribosomal protein uS13 family. In terms of assembly, part of the 30S ribosomal subunit. Forms a loose heterodimer with protein S19. Forms two bridges to the 50S subunit in the 70S ribosome.

Its function is as follows. Located at the top of the head of the 30S subunit, it contacts several helices of the 16S rRNA. In the 70S ribosome it contacts the 23S rRNA (bridge B1a) and protein L5 of the 50S subunit (bridge B1b), connecting the 2 subunits; these bridges are implicated in subunit movement. Contacts the tRNAs in the A and P-sites. This is Small ribosomal subunit protein uS13 from Shewanella baltica (strain OS223).